The primary structure comprises 460 residues: Light-independent protochlorophyllide reductase subunit N (460 aa).

[4Fe-4S] cluster contacts are provided by cysteine 22, cysteine 47, and cysteine 107.

The protein belongs to the BchN/ChlN family. As to quaternary structure, protochlorophyllide reductase is composed of three subunits; ChlL, ChlN and ChlB. Forms a heterotetramer of two ChlB and two ChlN subunits. [4Fe-4S] cluster is required as a cofactor.

It catalyses the reaction chlorophyllide a + oxidized 2[4Fe-4S]-[ferredoxin] + 2 ADP + 2 phosphate = protochlorophyllide a + reduced 2[4Fe-4S]-[ferredoxin] + 2 ATP + 2 H2O. It functions in the pathway porphyrin-containing compound metabolism; chlorophyll biosynthesis (light-independent). Functionally, component of the dark-operative protochlorophyllide reductase (DPOR) that uses Mg-ATP and reduced ferredoxin to reduce ring D of protochlorophyllide (Pchlide) to form chlorophyllide a (Chlide). This reaction is light-independent. The NB-protein (ChlN-ChlB) is the catalytic component of the complex. This chain is Light-independent protochlorophyllide reductase subunit N, found in Thermosynechococcus vestitus (strain NIES-2133 / IAM M-273 / BP-1).